We begin with the raw amino-acid sequence, 170 residues long: MPRSRINGNFIDKTFSIVANILLRIIPTTSGEKRAFTYYRDGMLAQSEGNYAEALQNYYEATRLEIDPYDRSYILYNIGLIHTSNGEHTKALEYYFRALERNPFLPQAFNNMAVICHYRGEQAILQGDSEIAEAWFDQAAEYWKQAIALTPGNYIEAQNWLKITKRFEFE.

TPR repeat units lie at residues 35 to 68 (AFTYYRDGMLAQSEGNYAEALQNYYEATRLEIDP), 72 to 105 (SYILYNIGLIHTSNGEHTKALEYYFRALERNPFL), and 120 to 153 (GEQAILQGDSEIAEAWFDQAAEYWKQAIALTPGN).

This sequence belongs to the Ycf3 family.

Its subcellular location is the plastid. It localises to the chloroplast thylakoid membrane. Its function is as follows. Essential for the assembly of the photosystem I (PSI) complex. May act as a chaperone-like factor to guide the assembly of the PSI subunits. The polypeptide is Photosystem I assembly protein Ycf3 (Oryza nivara (Indian wild rice)).